The chain runs to 360 residues: MLVWLAEHLVKYYSGFNVFSYLTFRAIVSLLTALFISLWMGPRMIARLQKLSFGQVVRNDGPESHFSKRGTPTMGGIMILTAIVISVLLWAYPSNPYVWCVLVVLIGYGIIGFVDDYRKVVRKDTKGLIARWKYFWMSVIALGVAFALYLVGKDTPATQLVVPFFKDVMPQLGLFYILLSYFVIVGTGNAVNLTDGLDGLAIMPTVFVAAGFALVAWATGNMNFANYLHIPYLRHAGELVIVCTAIVGAGLGFLWFNTYPAQVFMGDVGSLALGGALGIIAVLLRQEFLLVIMGGVFVVETLSVILQVGSFKLRGQRIFRMAPIHHHYELKGWPEPRVIVRFWIISLMLVLIGLATLKVR.

Residues 1-25 (MLVWLAEHLVKYYSGFNVFSYLTFR) are Periplasmic-facing. A helical membrane pass occupies residues 26–46 (AIVSLLTALFISLWMGPRMIA). Residues 47 to 71 (RLQKLSFGQVVRNDGPESHFSKRGT) lie on the Cytoplasmic side of the membrane. A helical transmembrane segment spans residues 72 to 92 (PTMGGIMILTAIVISVLLWAY). Residue Pro93 is a topological domain, periplasmic. The helical transmembrane segment at 94–114 (SNPYVWCVLVVLIGYGIIGFV) threads the bilayer. Over 115–131 (DDYRKVVRKDTKGLIAR) the chain is Cytoplasmic. A helical membrane pass occupies residues 132 to 152 (WKYFWMSVIALGVAFALYLVG). The Periplasmic segment spans residues 153-167 (KDTPATQLVVPFFKD). Residues 168-188 (VMPQLGLFYILLSYFVIVGTG) traverse the membrane as a helical segment. Residues 189 to 198 (NAVNLTDGLD) lie on the Cytoplasmic side of the membrane. Residues 199–219 (GLAIMPTVFVAAGFALVAWAT) traverse the membrane as a helical segment. The Periplasmic portion of the chain corresponds to 220-235 (GNMNFANYLHIPYLRH). Residues 236–256 (AGELVIVCTAIVGAGLGFLWF) traverse the membrane as a helical segment. The Cytoplasmic segment spans residues 257–262 (NTYPAQ). A helical membrane pass occupies residues 263–283 (VFMGDVGSLALGGALGIIAVL). Residues 284 to 287 (LRQE) lie on the Periplasmic side of the membrane. The helical transmembrane segment at 288–308 (FLLVIMGGVFVVETLSVILQV) threads the bilayer. The Cytoplasmic segment spans residues 309–337 (GSFKLRGQRIFRMAPIHHHYELKGWPEPR). Residues 338–358 (VIVRFWIISLMLVLIGLATLK) form a helical membrane-spanning segment. The Periplasmic segment spans residues 359 to 360 (VR).

Belongs to the glycosyltransferase 4 family. MraY subfamily. It depends on Mg(2+) as a cofactor.

Its subcellular location is the cell inner membrane. The enzyme catalyses UDP-N-acetyl-alpha-D-muramoyl-L-alanyl-gamma-D-glutamyl-meso-2,6-diaminopimeloyl-D-alanyl-D-alanine + di-trans,octa-cis-undecaprenyl phosphate = di-trans,octa-cis-undecaprenyl diphospho-N-acetyl-alpha-D-muramoyl-L-alanyl-D-glutamyl-meso-2,6-diaminopimeloyl-D-alanyl-D-alanine + UMP. Its pathway is cell wall biogenesis; peptidoglycan biosynthesis. Functionally, catalyzes the initial step of the lipid cycle reactions in the biosynthesis of the cell wall peptidoglycan: transfers peptidoglycan precursor phospho-MurNAc-pentapeptide from UDP-MurNAc-pentapeptide onto the lipid carrier undecaprenyl phosphate, yielding undecaprenyl-pyrophosphoryl-MurNAc-pentapeptide, known as lipid I. In Salmonella agona (strain SL483), this protein is Phospho-N-acetylmuramoyl-pentapeptide-transferase.